A 282-amino-acid chain; its full sequence is Aldo-keto reductase BQ2027_MB2996 (282 aa).

Residue tyrosine 57 is the Proton donor of the active site. Leucine 197, valine 235, arginine 237, serine 238, alanine 239, arginine 243, serine 246, asparagine 247, and arginine 273 together coordinate NADPH.

Belongs to the aldo/keto reductase family.

In Mycobacterium bovis (strain ATCC BAA-935 / AF2122/97), this protein is Aldo-keto reductase BQ2027_MB2996.